The following is a 192-amino-acid chain: Small ribosomal subunit protein uS4B (192 aa).

An S4 RNA-binding domain is found at 83-145 (RRLDNLVYRL…SRKIQTYASN (63 aa)).

The protein belongs to the universal ribosomal protein uS4 family. Part of the 30S ribosomal subunit. Contacts protein S5. The interaction surface between S4 and S5 is involved in control of translational fidelity.

Functionally, one of the primary rRNA binding proteins, it binds directly to 16S rRNA where it nucleates assembly of the body of the 30S subunit. With S5 and S12 plays an important role in translational accuracy. This is Small ribosomal subunit protein uS4B (rpsD2) from Clostridium acetobutylicum (strain ATCC 824 / DSM 792 / JCM 1419 / IAM 19013 / LMG 5710 / NBRC 13948 / NRRL B-527 / VKM B-1787 / 2291 / W).